Here is a 323-residue protein sequence, read N- to C-terminus: o-succinylbenzoate synthase (323 aa).

Residue lysine 134 is the Proton donor of the active site. Aspartate 162, glutamate 191, and aspartate 214 together coordinate Mg(2+). Catalysis depends on lysine 236, which acts as the Proton acceptor.

Belongs to the mandelate racemase/muconate lactonizing enzyme family. MenC type 1 subfamily. A divalent metal cation is required as a cofactor.

The enzyme catalyses (1R,6R)-6-hydroxy-2-succinyl-cyclohexa-2,4-diene-1-carboxylate = 2-succinylbenzoate + H2O. The protein operates within quinol/quinone metabolism; 1,4-dihydroxy-2-naphthoate biosynthesis; 1,4-dihydroxy-2-naphthoate from chorismate: step 4/7. Its pathway is quinol/quinone metabolism; menaquinone biosynthesis. Its function is as follows. Converts 2-succinyl-6-hydroxy-2,4-cyclohexadiene-1-carboxylate (SHCHC) to 2-succinylbenzoate (OSB). The chain is o-succinylbenzoate synthase from Yersinia pseudotuberculosis serotype O:1b (strain IP 31758).